A 345-amino-acid polypeptide reads, in one-letter code: NADPH dehydrogenase (345 aa).

23-26 lines the FMN pocket; sequence SPMC. Tyr-28 provides a ligand contact to substrate. FMN-binding residues include Ala-60 and Gln-102. Position 164-167 (164-167) interacts with substrate; it reads HGAH. FMN is bound by residues Arg-215 and 307–308; that span reads GR.

The protein belongs to the NADH:flavin oxidoreductase/NADH oxidase family. NamA subfamily. In terms of assembly, homotetramer. The cofactor is FMN.

It catalyses the reaction A + NADPH + H(+) = AH2 + NADP(+). In terms of biological role, catalyzes the reduction of the double bond of an array of alpha,beta-unsaturated aldehydes and ketones. It also reduces the nitro group of nitroester and nitroaromatic compounds. It could have a role in detoxification processes. The sequence is that of NADPH dehydrogenase from Bacillus cereus (strain AH820).